A 385-amino-acid polypeptide reads, in one-letter code: Glutamate 5-kinase (385 aa).

ATP is bound at residue Lys-18. Ser-57, Asp-144, and Asn-156 together coordinate substrate. Residue 218–224 coordinates ATP; the sequence is TGGMKSK. Positions 283–361 constitute a PUA domain; the sequence is RGVLSIDAGA…SRIEQVLGHK (79 aa).

It belongs to the glutamate 5-kinase family.

The protein resides in the cytoplasm. The enzyme catalyses L-glutamate + ATP = L-glutamyl 5-phosphate + ADP. The protein operates within amino-acid biosynthesis; L-proline biosynthesis; L-glutamate 5-semialdehyde from L-glutamate: step 1/2. Its function is as follows. Catalyzes the transfer of a phosphate group to glutamate to form L-glutamate 5-phosphate. This is Glutamate 5-kinase from Syntrophus aciditrophicus (strain SB).